The chain runs to 663 residues: Oligopeptide-binding protein SarA (663 aa).

A signal peptide spans 1-22 (MKKGKILALAGVALLATGVLAA). Cys-23 carries the N-palmitoyl cysteine lipid modification. A lipid anchor (S-diacylglycerol cysteine) is attached at Cys-23. The interval 637–663 (QKAQEKWNKERAESNKKAQEELEKHVK) is disordered.

Belongs to the bacterial solute-binding protein 5 family.

Its subcellular location is the cell membrane. May be involved in the expression of cell surface properties important for colonization of the human oral cavity. It may also be involved in uptake processes. In Streptococcus gordonii (strain Challis / ATCC 35105 / BCRC 15272 / CH1 / DL1 / V288), this protein is Oligopeptide-binding protein SarA (sarA).